Reading from the N-terminus, the 385-residue chain is Outer membrane porin protein BP0840 (385 aa).

The N-terminal stretch at 1–20 (MKKTLLAAALLAGFAGAAQA) is a signal peptide.

It to bacterial outer membrane proteins and porins. In terms of assembly, homotrimer.

It is found in the cell outer membrane. Its function is as follows. Forms anion selective channels. This is Outer membrane porin protein BP0840 from Bordetella pertussis (strain Tohama I / ATCC BAA-589 / NCTC 13251).